The sequence spans 554 residues: ATP synthase subunit alpha (554 aa).

173 to 180 (GDRQTGKT) contributes to the ATP binding site. The interval 531–554 (SHLAAEKVRKHVPPSKPTTQRTAG) is disordered.

This sequence belongs to the ATPase alpha/beta chains family. F-type ATPases have 2 components, CF(1) - the catalytic core - and CF(0) - the membrane proton channel. CF(1) has five subunits: alpha(3), beta(3), gamma(1), delta(1), epsilon(1). CF(0) has three main subunits: a(1), b(2) and c(9-12). The alpha and beta chains form an alternating ring which encloses part of the gamma chain. CF(1) is attached to CF(0) by a central stalk formed by the gamma and epsilon chains, while a peripheral stalk is formed by the delta and b chains.

The protein resides in the cell membrane. It catalyses the reaction ATP + H2O + 4 H(+)(in) = ADP + phosphate + 5 H(+)(out). Its function is as follows. Produces ATP from ADP in the presence of a proton gradient across the membrane. The alpha chain is a regulatory subunit. This Acidothermus cellulolyticus (strain ATCC 43068 / DSM 8971 / 11B) protein is ATP synthase subunit alpha.